Here is a 615-residue protein sequence, read N- to C-terminus: 1-deoxy-D-xylulose-5-phosphate synthase (615 aa).

Thiamine diphosphate contacts are provided by residues histidine 76 and 117 to 119; that span reads GHS. Aspartate 148 contributes to the Mg(2+) binding site. Thiamine diphosphate is bound by residues 149–150, asparagine 177, tyrosine 284, and glutamate 365; that span reads GA. A Mg(2+)-binding site is contributed by asparagine 177.

The protein belongs to the transketolase family. DXPS subfamily. As to quaternary structure, homodimer. Requires Mg(2+) as cofactor. Thiamine diphosphate serves as cofactor.

It carries out the reaction D-glyceraldehyde 3-phosphate + pyruvate + H(+) = 1-deoxy-D-xylulose 5-phosphate + CO2. The protein operates within metabolic intermediate biosynthesis; 1-deoxy-D-xylulose 5-phosphate biosynthesis; 1-deoxy-D-xylulose 5-phosphate from D-glyceraldehyde 3-phosphate and pyruvate: step 1/1. In terms of biological role, catalyzes the acyloin condensation reaction between C atoms 2 and 3 of pyruvate and glyceraldehyde 3-phosphate to yield 1-deoxy-D-xylulose-5-phosphate (DXP). This is 1-deoxy-D-xylulose-5-phosphate synthase from Francisella tularensis subsp. tularensis (strain FSC 198).